Reading from the N-terminus, the 541-residue chain is Malate synthase (541 aa).

Residue arginine 169 is the Proton acceptor of the active site. The active-site Proton donor is the aspartate 454.

The protein belongs to the malate synthase family.

The protein localises to the cytoplasm. It catalyses the reaction glyoxylate + acetyl-CoA + H2O = (S)-malate + CoA + H(+). It participates in carbohydrate metabolism; glyoxylate cycle; (S)-malate from isocitrate: step 2/2. The chain is Malate synthase (aceB) from Streptomyces clavuligerus.